The chain runs to 79 residues: Raniseptin-9 (79 aa).

An N-terminal signal peptide occupies residues 1–22; sequence MAFLKKSLFLVLFLGIVSLSIC. The propeptide occupies 23–49; it reads EEEKREGEEEEKQEEENEELSEEELRE. The interval 27-46 is disordered; it reads REGEEEEKQEEENEELSEEE. Acidic residues predominate over residues 30-44; it reads EEEEKQEEENEELSE.

This sequence belongs to the frog skin active peptide (FSAP) family. Dermaseptin subfamily. In terms of tissue distribution, expressed by the skin glands.

Its subcellular location is the secreted. Has antibacterial activity. The protein is Raniseptin-9 of Boana raniceps (Chaco tree frog).